A 330-amino-acid chain; its full sequence is D-alanine--D-alanine ligase (330 aa).

Residues 122 to 323 (NRFLSGFGIR…MKEVLCTIIR (202 aa)) form the ATP-grasp domain. Position 151–206 (151–206 (TARMGLPLFVKPNVGGSSIATTKVVEAAQLLPAIGQAFSEGEEVMIERLICGTEVT)) interacts with ATP. Residues Asp277, Glu290, and Asn292 each coordinate Mg(2+).

The protein belongs to the D-alanine--D-alanine ligase family. The cofactor is Mg(2+). Requires Mn(2+) as cofactor.

The protein resides in the cytoplasm. It catalyses the reaction 2 D-alanine + ATP = D-alanyl-D-alanine + ADP + phosphate + H(+). It functions in the pathway cell wall biogenesis; peptidoglycan biosynthesis. Functionally, cell wall formation. The sequence is that of D-alanine--D-alanine ligase from Porphyromonas gingivalis (strain ATCC 33277 / DSM 20709 / CIP 103683 / JCM 12257 / NCTC 11834 / 2561).